The sequence spans 177 residues: ATP synthase subunit delta (177 aa).

It belongs to the ATPase delta chain family. F-type ATPases have 2 components, F(1) - the catalytic core - and F(0) - the membrane proton channel. F(1) has five subunits: alpha(3), beta(3), gamma(1), delta(1), epsilon(1). F(0) has three main subunits: a(1), b(2) and c(10-14). The alpha and beta chains form an alternating ring which encloses part of the gamma chain. F(1) is attached to F(0) by a central stalk formed by the gamma and epsilon chains, while a peripheral stalk is formed by the delta and b chains.

The protein localises to the cell inner membrane. Its function is as follows. F(1)F(0) ATP synthase produces ATP from ADP in the presence of a proton or sodium gradient. F-type ATPases consist of two structural domains, F(1) containing the extramembraneous catalytic core and F(0) containing the membrane proton channel, linked together by a central stalk and a peripheral stalk. During catalysis, ATP synthesis in the catalytic domain of F(1) is coupled via a rotary mechanism of the central stalk subunits to proton translocation. Functionally, this protein is part of the stalk that links CF(0) to CF(1). It either transmits conformational changes from CF(0) to CF(1) or is implicated in proton conduction. This is ATP synthase subunit delta from Aliivibrio fischeri (strain ATCC 700601 / ES114) (Vibrio fischeri).